The following is a 975-amino-acid chain: Ubiquitin C-terminal hydrolase 15 (975 aa).

Positions 88, 91, 99, 102, 108, 112, 121, and 125 each coordinate Zn(2+). Residues 88–125 (CATCHGPAKTRCSRCKSVRYCSGKCQIIHWRQGHKQTC) form an MYND-type zinc finger. The disordered stretch occupies residues 301–378 (EGPYASAAES…STKTAVSTNS (78 aa)). Over residues 309 to 322 (ESLQRSNSSGNVTG) the composition is skewed to polar residues. Over residues 354-369 (YDGHEKNPHNKNEQRS) the composition is skewed to basic and acidic residues. The USP domain occupies 441-747 (RGLFNCGNSC…GAYMLFYMRS (307 aa)). Cys450 functions as the Nucleophile in the catalytic mechanism. His706 acts as the Proton acceptor in catalysis. Residues 764–783 (PTCSKRHSSKSSKGSKQDLN) form a disordered region.

This sequence belongs to the peptidase C19 family. Highly expressed in young panicles. Expressed in roots, leaf blades, leaf sheaths and stems. Expressed at low levels in brown grains.

It is found in the cytoplasm. The protein resides in the nucleus. The catalysed reaction is Thiol-dependent hydrolysis of ester, thioester, amide, peptide and isopeptide bonds formed by the C-terminal Gly of ubiquitin (a 76-residue protein attached to proteins as an intracellular targeting signal).. Its function is as follows. Recognizes and hydrolyzes the peptide bond at the C-terminal Gly of ubiquitin. Involved in the processing of poly-ubiquitin precursors as well as that of ubiquitinated proteins. Involved in the regulation of grain size. Acts as positive regulator of grain width and size by influencing cell proliferation. Functions partially antagonistically with GW2 in the regulation of grain width. Possesses deubiquitinating enzyme activity in vitro. The chain is Ubiquitin C-terminal hydrolase 15 from Oryza sativa subsp. japonica (Rice).